A 368-amino-acid polypeptide reads, in one-letter code: Phospho-N-acetylmuramoyl-pentapeptide-transferase (368 aa).

9 helical membrane-spanning segments follow: residues 30-50 (AAAI…IRFL), 72-92 (VPTM…LLWA), 98-118 (HVWL…IDDY), 139-159 (VALG…SVLL), 170-190 (FSVD…TAVS), 201-221 (GLAA…AYLG), 238-258 (AGEI…FLWF), 262-284 (PAEV…VIAL), and 345-365 (KIVI…LMTL).

The protein belongs to the glycosyltransferase 4 family. MraY subfamily. It depends on Mg(2+) as a cofactor.

It is found in the cell inner membrane. The enzyme catalyses UDP-N-acetyl-alpha-D-muramoyl-L-alanyl-gamma-D-glutamyl-meso-2,6-diaminopimeloyl-D-alanyl-D-alanine + di-trans,octa-cis-undecaprenyl phosphate = di-trans,octa-cis-undecaprenyl diphospho-N-acetyl-alpha-D-muramoyl-L-alanyl-D-glutamyl-meso-2,6-diaminopimeloyl-D-alanyl-D-alanine + UMP. The protein operates within cell wall biogenesis; peptidoglycan biosynthesis. Catalyzes the initial step of the lipid cycle reactions in the biosynthesis of the cell wall peptidoglycan: transfers peptidoglycan precursor phospho-MurNAc-pentapeptide from UDP-MurNAc-pentapeptide onto the lipid carrier undecaprenyl phosphate, yielding undecaprenyl-pyrophosphoryl-MurNAc-pentapeptide, known as lipid I. This Chlorobaculum parvum (strain DSM 263 / NCIMB 8327) (Chlorobium vibrioforme subsp. thiosulfatophilum) protein is Phospho-N-acetylmuramoyl-pentapeptide-transferase.